Here is a 238-residue protein sequence, read N- to C-terminus: Thymidine kinase, cytosolic (238 aa).

Serine 2 is subject to N-acetylserine. Phosphoserine occurs at positions 2 and 13. Residues 26 to 33 (GPMFSGKS), 58 to 60 (DTR), and 97 to 100 (DEGQ) each bind ATP. The Proton acceptor role is filled by glutamate 98. Phenylalanine 128 serves as a coordination point for substrate. Positions 153 and 156 each coordinate Zn(2+). Substrate-binding positions include 172 to 176 (VEVIG) and tyrosine 181. Zn(2+)-binding residues include cysteine 185 and cysteine 188. The KEN box motif lies at 206–208 (KEN). Serine 235 is modified (phosphoserine).

Belongs to the thymidine kinase family. Homotetramer. Tetramerization from dimerization is induced by ATP and increases catalytic efficiency due to a high affinity for thymidine. Tetramerization is inhibited by phosphorylation at Ser-13. Interacts (via the KEN box) with FZR1. Phosphorylated on Ser-13 in mitosis. Phosphorylation of Ser-13 by CDK1 during mitosis reduces homotetramerization and catalytic efficiency when DNA replication is complete and intracellular TK1 is still present at a high level. Post-translationally, polyubiquitinated. Postmitosis, ubiquitination leads to proteasomal degradation. The KEN box sequence located at the C-terminal region targets for degradation by the anaphase promoting complex (APC/C) activated and rate-limited by FZR1.

The protein localises to the cytoplasm. It catalyses the reaction thymidine + ATP = dTMP + ADP + H(+). Cell-cycle-regulated enzyme of importance in nucleotide metabolism. Catalyzes the first enzymatic step in the salvage pathway converting thymidine into thymidine monophosphate. Transcriptional regulation limits expression to the S phase of the cell cycle and transient expression coincides with the oscillation in the intracellular dTTP concentration. The protein is Thymidine kinase, cytosolic (TK1) of Bos taurus (Bovine).